Reading from the N-terminus, the 128-residue chain is Protein Wnt-2b-B (128 aa).

2 cysteine pairs are disulfide-bonded: C3/C16 and C5/C11. Residue S8 is the site of O-palmitoleoyl serine; by PORCN attachment. N-linked (GlcNAc...) asparagine glycosylation is present at N48. Intrachain disulfides connect C90/C105 and C127/C128.

The protein belongs to the Wnt family. Palmitoleoylation is required for efficient binding to frizzled receptors. Depalmitoleoylation leads to Wnt signaling pathway inhibition.

Its subcellular location is the secreted. It localises to the extracellular space. The protein localises to the extracellular matrix. Ligand for members of the frizzled family of seven transmembrane receptors. Functions in the canonical Wnt/beta-catenin signaling pathway. The polypeptide is Protein Wnt-2b-B (wnt2b-b) (Xenopus laevis (African clawed frog)).